The chain runs to 119 residues: MARVKYGKVTRARRKRWIKLAKGYFGTKKSSYKKAHEQVIRSMAYAFIGRKERKRDFRSLWIVRINAAVRPEGLSYSTFMHGLKLANININRKMLSELAINNSEEFKQIVQQAKKALNK.

This sequence belongs to the bacterial ribosomal protein bL20 family.

Binds directly to 23S ribosomal RNA and is necessary for the in vitro assembly process of the 50S ribosomal subunit. It is not involved in the protein synthesizing functions of that subunit. The protein is Large ribosomal subunit protein bL20 of Mycoplasma capricolum subsp. capricolum (strain California kid / ATCC 27343 / NCTC 10154).